The primary structure comprises 266 residues: Probable septum site-determining protein MinC (266 aa).

Residues 1-21 are compositionally biased toward low complexity; it reads MSEAESTPVEEPVVESTEGSE. Residues 1–28 are disordered; that stretch reads MSEAESTPVEEPVVESTEGSEAIPEVEQ.

It belongs to the MinC family. As to quaternary structure, interacts with MinD and FtsZ.

Cell division inhibitor that blocks the formation of polar Z ring septums. Rapidly oscillates between the poles of the cell to destabilize FtsZ filaments that have formed before they mature into polar Z rings. Prevents FtsZ polymerization. This chain is Probable septum site-determining protein MinC, found in Thermosynechococcus vestitus (strain NIES-2133 / IAM M-273 / BP-1).